The chain runs to 196 residues: uncharacterized protein (196 aa).

The span at 1–10 (MPGMVPPHVP) shows a compositional bias: pro residues. 2 disordered regions span residues 1–118 (MPGM…EGSG) and 176–196 (TEQAAPPVCPAPASRRLSAPG). The segment covering 25–45 (PVAPQVPSPGGAPGQGPYPYS) has biased composition (low complexity). The segment covering 54–69 (LDTSGKNLTEQNSYSN) has biased composition (polar residues).

This is an uncharacterized protein from Homo sapiens (Human).